We begin with the raw amino-acid sequence, 153 residues long: MLRNTFTRAGGLSRITSVRFAQTHALSNAAVMDLQSRWENMPSTEQQDIVSKLSERQKLPWAQLTEPEKQAVWYISYGEWGPRRPVLNKGDSSFIAKGVAAGLLFSVGLFAVVRMAGGQDAKTMNKEWQLKSDEYLKSKNANPWGGYSQVQSK.

Residues 1-20 (MLRNTFTRAGGLSRITSVRF) constitute a mitochondrion transit peptide. The Mitochondrial matrix portion of the chain corresponds to 21 to 88 (AQTHALSNAA…EWGPRRPVLN (68 aa)). A helical membrane pass occupies residues 89–111 (KGDSSFIAKGVAAGLLFSVGLFA). Topologically, residues 112-153 (VVRMAGGQDAKTMNKEWQLKSDEYLKSKNANPWGGYSQVQSK) are mitochondrial intermembrane.

Belongs to the cytochrome c oxidase IV family. As to quaternary structure, component of the cytochrome c oxidase (complex IV, CIV), a multisubunit enzyme composed of 12 subunits. The complex is composed of a catalytic core of 3 subunits COX1, COX2 and COX3, encoded in the mitochondrial DNA, and 9 supernumerary subunits COX4, COX5A (or COX5B), COX6, COX7, COX8, COX9, COX12, COX13 and COX26, which are encoded in the nuclear genome. COX5A is the predominant subunit V during aerobic/normoxic growth, it gets replaced by COX5B under anaerobic/hypoxic conditions. The complex exists as a monomer or a dimer and forms supercomplexes (SCs) in the inner mitochondrial membrane with a dimer of ubiquinol-cytochrome c oxidoreductase (cytochrome b-c1 complex, complex III, CIII), resulting in 2 different assemblies (supercomplexes III(2)IV and III(2)IV(2)). COX5A interacts with COR1, CYT1 and QCR6 at the CIII-CIV interface.

The protein localises to the mitochondrion inner membrane. The protein operates within energy metabolism; oxidative phosphorylation. Component of the cytochrome c oxidase, the last enzyme in the mitochondrial electron transport chain which drives oxidative phosphorylation. The respiratory chain contains 3 multisubunit complexes succinate dehydrogenase (complex II, CII), ubiquinol-cytochrome c oxidoreductase (cytochrome b-c1 complex, complex III, CIII) and cytochrome c oxidase (complex IV, CIV), that cooperate to transfer electrons derived from NADH and succinate to molecular oxygen, creating an electrochemical gradient over the inner membrane that drives transmembrane transport and the ATP synthase. Cytochrome c oxidase is the component of the respiratory chain that catalyzes the reduction of oxygen to water. Electrons originating from reduced cytochrome c in the intermembrane space (IMS) are transferred via the dinuclear copper A center (CU(A)) of COX2 and heme A of COX1 to the active site in COX1, a binuclear center (BNC) formed by heme A3 and copper B (CU(B)). The BNC reduces molecular oxygen to 2 water molecules using 4 electrons from cytochrome c in the IMS and 4 protons from the mitochondrial matrix. The protein is Cytochrome c oxidase subunit 5A, mitochondrial (COX5A) of Saccharomyces cerevisiae (strain ATCC 204508 / S288c) (Baker's yeast).